Here is a 289-residue protein sequence, read N- to C-terminus: MENGYTYEDYKNTAEWLLSHTKHRPQVAIICGSGLGGLTDKLTQAQIFDYGEIPNFPRSTVPGHAGRLVFGFLNGRACVMMQGRFHMYEGYPLWKVTFPVRVFHLLGVDTLVVTNAAGGLNPKFEVGDIMLIRDHINLPGFSGQNPLRGPNDERFGDRFPAMSDAYDRTMRQRALSTWKQMGEQRELQEGTYVMVAGPSFETVAECRVLQKLGADAVGMSTVPEVIVARHCGLRVFGFSLITNKVIMDYESLEKANHEEVLAAGKQAAQKLEQFVSILMASIPLPDKAS.

Met-1 carries the post-translational modification N-acetylmethionine. Phosphate is bound by residues Ser-33, His-64, and 84 to 86; that span reads RFH. A purine D-ribonucleoside is bound at residue Tyr-88. Ala-116 serves as a coordination point for phosphate. The a purine D-ribonucleoside site is built by Glu-201 and Met-219. Position 220 (Ser-220) interacts with phosphate. Asn-243 provides a ligand contact to a purine D-ribonucleoside. Ser-251 carries the phosphoserine modification. Position 257 (His-257) interacts with a purine D-ribonucleoside.

This sequence belongs to the PNP/MTAP phosphorylase family. In terms of assembly, homotrimer. In terms of tissue distribution, expressed in red blood cells; overexpressed in red blood cells (cytoplasm) of patients with hereditary non-spherocytic hemolytic anemia of unknown etiology.

Its subcellular location is the cytoplasm. It carries out the reaction inosine + phosphate = alpha-D-ribose 1-phosphate + hypoxanthine. It catalyses the reaction guanosine + phosphate = alpha-D-ribose 1-phosphate + guanine. The catalysed reaction is 2'-deoxyguanosine + phosphate = 2-deoxy-alpha-D-ribose 1-phosphate + guanine. The enzyme catalyses 2'-deoxyinosine + phosphate = 2-deoxy-alpha-D-ribose 1-phosphate + hypoxanthine. The protein operates within purine metabolism; purine nucleoside salvage. With respect to regulation, inhibited by 5'-deaza-1'-aza-2c-deoxy-1'-(9-methylene)-Immucilin-G (DADMe-ImmG). Its function is as follows. Catalyzes the phosphorolytic breakdown of the N-glycosidic bond in the beta-(deoxy)ribonucleoside molecules, with the formation of the corresponding free purine bases and pentose-1-phosphate. Preferentially acts on 6-oxopurine nucleosides including inosine and guanosine. The protein is Purine nucleoside phosphorylase (PNP) of Homo sapiens (Human).